The sequence spans 70 residues: Large ribosomal subunit protein bL32 (70 aa).

Residues 1 to 19 (MAVPKRKTTPSRRGMRRSH) show a composition bias toward basic residues. Positions 1-21 (MAVPKRKTTPSRRGMRRSHQA) are disordered.

It belongs to the bacterial ribosomal protein bL32 family.

This is Large ribosomal subunit protein bL32 from Gluconobacter oxydans (strain 621H) (Gluconobacter suboxydans).